The following is a 297-amino-acid chain: MTGEDFKIKSGLAQMLKGGVIMDVVTPEQAKIAEKSGACAVMALESIPADMRKSGKVCRMSDPKMIKDIMNSVSIPVMAKVRIGHFVEAQIIEALEVDYIDESEVLTPADWTHHIEKDKFKVPFVCGAKDLGEALRRINEGAAMIRTKGEAGTGDVSEAVKHIRRITEEIKACQQLKSEDDIAKVAEEMRVPVSLLKDVLEKGKLPVVNFAAGGVATPADAALLMQLGCDGVFVGSGIFKSSNPVRLATAVVEATTHFDNPSKLLEVSSDLGELMGGVSIESISHASNGVRLSEIGW.

Asp23 is a D-ribose 5-phosphate binding site. Catalysis depends on Lys80, which acts as the Schiff-base intermediate with D-ribose 5-phosphate. D-ribose 5-phosphate is bound at residue Gly152. Residue Arg164 participates in D-glyceraldehyde 3-phosphate binding. D-ribose 5-phosphate is bound by residues Gly214 and 235–236 (GS).

Belongs to the PdxS/SNZ family. In terms of assembly, homohexamer. Interacts with AIM18.

The enzyme catalyses aldehydo-D-ribose 5-phosphate + D-glyceraldehyde 3-phosphate + L-glutamine = pyridoxal 5'-phosphate + L-glutamate + phosphate + 3 H2O + H(+). It participates in cofactor biosynthesis; pyridoxal 5'-phosphate biosynthesis. Its function is as follows. Catalyzes the formation of pyridoxal 5'-phosphate from ribose 5-phosphate (RBP), glyceraldehyde 3-phosphate (G3P) and ammonia. The ammonia is provided by a SNO isoform. Can also use ribulose 5-phosphate and dihydroxyacetone phosphate as substrates, resulting from enzyme-catalyzed isomerization of RBP and G3P, respectively. In Saccharomyces cerevisiae (strain ATCC 204508 / S288c) (Baker's yeast), this protein is Pyridoxal 5'-phosphate synthase subunit SNZ1 (SNZ1).